Consider the following 83-residue polypeptide: RNA-binding protein Hfq (83 aa).

Residues 10–70 (DTFLNQVRKE…ISTVMPLRPI (61 aa)) enclose the Sm domain.

This sequence belongs to the Hfq family. Homohexamer.

RNA chaperone that binds small regulatory RNA (sRNAs) and mRNAs to facilitate mRNA translational regulation in response to envelope stress, environmental stress and changes in metabolite concentrations. Also binds with high specificity to tRNAs. The sequence is that of RNA-binding protein Hfq from Desulfitobacterium hafniense (strain DSM 10664 / DCB-2).